The following is a 130-amino-acid chain: Cuticle protein 14 isoform b (130 aa).

A Chitin-binding type R&amp;R domain is found at 24–90 (IGNYNFGYNE…NVHTNEPGTD (67 aa)).

The protein is Cuticle protein 14 isoform b of Limulus polyphemus (Atlantic horseshoe crab).